The chain runs to 148 residues: D-aminoacyl-tRNA deacylase (148 aa).

The short motif at 137–138 (GP) is the Gly-cisPro motif, important for rejection of L-amino acids element.

This sequence belongs to the DTD family. As to quaternary structure, homodimer.

The protein resides in the cytoplasm. The catalysed reaction is glycyl-tRNA(Ala) + H2O = tRNA(Ala) + glycine + H(+). The enzyme catalyses a D-aminoacyl-tRNA + H2O = a tRNA + a D-alpha-amino acid + H(+). Functionally, an aminoacyl-tRNA editing enzyme that deacylates mischarged D-aminoacyl-tRNAs. Also deacylates mischarged glycyl-tRNA(Ala), protecting cells against glycine mischarging by AlaRS. Acts via tRNA-based rather than protein-based catalysis; rejects L-amino acids rather than detecting D-amino acids in the active site. By recycling D-aminoacyl-tRNA to D-amino acids and free tRNA molecules, this enzyme counteracts the toxicity associated with the formation of D-aminoacyl-tRNA entities in vivo and helps enforce protein L-homochirality. The polypeptide is D-aminoacyl-tRNA deacylase (Aquifex aeolicus (strain VF5)).